A 286-amino-acid polypeptide reads, in one-letter code: Putative sensory transducer protein YfmS (286 aa).

The Methyl-accepting transducer domain maps to 68–286 (ITDAIRSNQK…KMAEKALEEE (219 aa)).

It belongs to the methyl-accepting chemotaxis (MCP) protein family.

Chemotactic-signal transducers respond to changes in the concentration of attractants and repellents in the environment, transduce a signal from the outside to the inside of the cell, and facilitate sensory adaptation through the variation of the level of methylation. Attractants increase the level of methylation while repellents decrease the level of methylation. The chain is Putative sensory transducer protein YfmS (yfmS) from Bacillus subtilis (strain 168).